The primary structure comprises 172 residues: uncharacterized protein (172 aa).

The disordered stretch occupies residues 130–154; the sequence is EQEKGAAPQEGKDWQVISEEDKKNQ.

This is an uncharacterized protein from Bacillus subtilis (strain 168).